The chain runs to 137 residues: Large ribosomal subunit protein uL16 (137 aa).

Belongs to the universal ribosomal protein uL16 family. As to quaternary structure, part of the 50S ribosomal subunit.

In terms of biological role, binds 23S rRNA and is also seen to make contacts with the A and possibly P site tRNAs. This Streptococcus sanguinis (strain SK36) protein is Large ribosomal subunit protein uL16.